We begin with the raw amino-acid sequence, 322 residues long: Pantothenate kinase (322 aa).

100-107 lines the ATP pocket; that stretch reads GSVAVGKS.

It belongs to the prokaryotic pantothenate kinase family.

It localises to the cytoplasm. The enzyme catalyses (R)-pantothenate + ATP = (R)-4'-phosphopantothenate + ADP + H(+). It participates in cofactor biosynthesis; coenzyme A biosynthesis; CoA from (R)-pantothenate: step 1/5. The polypeptide is Pantothenate kinase (Brucella abortus (strain 2308)).